Reading from the N-terminus, the 263-residue chain is Metaxin-2 (263 aa).

An N-acetylserine modification is found at Ser2.

This sequence belongs to the metaxin family. In terms of assembly, interacts with MTX1/metaxin-1. Associates with the mitochondrial contact site and cristae organizing system (MICOS) complex, composed of at least MICOS10/MIC10, CHCHD3/MIC19, CHCHD6/MIC25, APOOL/MIC27, IMMT/MIC60, APOO/MIC23/MIC26 and QIL1/MIC13. This complex was also known under the names MINOS or MitOS complex. The MICOS complex associates with mitochondrial outer membrane proteins SAMM50, MTX1 and MTX2 (together described as components of the mitochondrial outer membrane sorting assembly machinery (SAM) complex) and DNAJC11, mitochondrial inner membrane protein TMEM11 and with HSPA9. The MICOS and SAM complexes together with DNAJC11 are part of a large protein complex spanning both membranes termed the mitochondrial intermembrane space bridging (MIB) complex.

The protein localises to the mitochondrion outer membrane. It is found in the mitochondrion. Involved in transport of proteins into the mitochondrion. The chain is Metaxin-2 (MTX2) from Homo sapiens (Human).